Consider the following 564-residue polypeptide: Septation ring formation regulator EzrA (564 aa).

At 1-4 (MVLF) the chain is on the extracellular side. Residues 5–23 (IILAILVVILIAIGVLFYM) form a helical membrane-spanning segment. At 24-564 (RSNKRNLIEK…KHIEEQVIKE (541 aa)) the chain is on the cytoplasmic side. Coiled coils occupy residues 84–126 (VEEK…HQVT), 165–223 (EAAE…LIRE), 271–303 (MISR…YEVK), and 350–435 (VRQF…RRLL).

The protein belongs to the EzrA family.

The protein localises to the cell membrane. Its function is as follows. Negative regulator of FtsZ ring formation; modulates the frequency and position of FtsZ ring formation. Inhibits FtsZ ring formation at polar sites. Interacts either with FtsZ or with one of its binding partners to promote depolymerization. The protein is Septation ring formation regulator EzrA of Staphylococcus epidermidis (strain ATCC 35984 / DSM 28319 / BCRC 17069 / CCUG 31568 / BM 3577 / RP62A).